The primary structure comprises 284 residues: Digeranylgeranylglyceryl phosphate synthase (284 aa).

7 helical membrane-spanning segments follow: residues 10–30 (IHNVIGAGLGAFTGYVASSMW), 37–57 (LILAVLVVALVDAGGNAINDV), 76–98 (AVSLRTATSLSYGLMGVGVILSA), 102–119 (YLQFLVALLTSVALIFYA), 126–146 (GIYGNLVVATATALSLFYGGL), 217–237 (LPLFLGYNILYGIVLVPFLYI), and 260–280 (GSAFLGMVAFALGSLPFQFLF).

This sequence belongs to the UbiA prenyltransferase family. DGGGP synthase subfamily. The cofactor is Mg(2+).

It is found in the cell membrane. The catalysed reaction is sn-3-O-(geranylgeranyl)glycerol 1-phosphate + (2E,6E,10E)-geranylgeranyl diphosphate = 2,3-bis-O-(geranylgeranyl)-sn-glycerol 1-phosphate + diphosphate. Its pathway is membrane lipid metabolism; glycerophospholipid metabolism. Functionally, prenyltransferase that catalyzes the transfer of the geranylgeranyl moiety of geranylgeranyl diphosphate (GGPP) to the C2 hydroxyl of (S)-3-O-geranylgeranylglyceryl phosphate (GGGP). This reaction is the second ether-bond-formation step in the biosynthesis of archaeal membrane lipids. This is Digeranylgeranylglyceryl phosphate synthase from Metallosphaera sedula (strain ATCC 51363 / DSM 5348 / JCM 9185 / NBRC 15509 / TH2).